Here is a 599-residue protein sequence, read N- to C-terminus: NADH-quinone oxidoreductase subunit C/D (599 aa).

The segment at 1–189 (MTDLTTHDLA…DPFELTKQKE (189 aa)) is NADH dehydrogenase I subunit C. The tract at residues 213 to 599 (DFMFLNLGPN…IDFVMSDVDR (387 aa)) is NADH dehydrogenase I subunit D.

It in the N-terminal section; belongs to the complex I 30 kDa subunit family. The protein in the C-terminal section; belongs to the complex I 49 kDa subunit family. As to quaternary structure, NDH-1 is composed of 13 different subunits. Subunits NuoB, CD, E, F, and G constitute the peripheral sector of the complex.

It localises to the cell inner membrane. It carries out the reaction a quinone + NADH + 5 H(+)(in) = a quinol + NAD(+) + 4 H(+)(out). In terms of biological role, NDH-1 shuttles electrons from NADH, via FMN and iron-sulfur (Fe-S) centers, to quinones in the respiratory chain. The immediate electron acceptor for the enzyme in this species is believed to be ubiquinone. Couples the redox reaction to proton translocation (for every two electrons transferred, four hydrogen ions are translocated across the cytoplasmic membrane), and thus conserves the redox energy in a proton gradient. The sequence is that of NADH-quinone oxidoreductase subunit C/D from Pectobacterium atrosepticum (strain SCRI 1043 / ATCC BAA-672) (Erwinia carotovora subsp. atroseptica).